The chain runs to 893 residues: Alanine--tRNA ligase (893 aa).

The protein belongs to the class-II aminoacyl-tRNA synthetase family.

The protein resides in the cytoplasm. It catalyses the reaction tRNA(Ala) + L-alanine + ATP = L-alanyl-tRNA(Ala) + AMP + diphosphate. Its function is as follows. Catalyzes the attachment of alanine to tRNA(Ala) in a two-step reaction: alanine is first activated by ATP to form Ala-AMP and then transferred to the acceptor end of tRNA(Ala). Also edits incorrectly charged Ser-tRNA(Ala) and Gly-tRNA(Ala) via its editing domain. The protein is Alanine--tRNA ligase (alaS) of Leuconostoc mesenteroides subsp. mesenteroides (strain ATCC 8293 / DSM 20343 / BCRC 11652 / CCM 1803 / JCM 6124 / NCDO 523 / NBRC 100496 / NCIMB 8023 / NCTC 12954 / NRRL B-1118 / 37Y).